Reading from the N-terminus, the 345-residue chain is Phenylalanine--tRNA ligase alpha subunit (345 aa).

Glutamate 266 is a binding site for Mg(2+).

The protein belongs to the class-II aminoacyl-tRNA synthetase family. Phe-tRNA synthetase alpha subunit type 1 subfamily. Tetramer of two alpha and two beta subunits. It depends on Mg(2+) as a cofactor.

It is found in the cytoplasm. The enzyme catalyses tRNA(Phe) + L-phenylalanine + ATP = L-phenylalanyl-tRNA(Phe) + AMP + diphosphate + H(+). The sequence is that of Phenylalanine--tRNA ligase alpha subunit from Burkholderia lata (strain ATCC 17760 / DSM 23089 / LMG 22485 / NCIMB 9086 / R18194 / 383).